A 327-amino-acid polypeptide reads, in one-letter code: E3 ubiquitin ligase Rnf121 (327 aa).

A run of 5 helical transmembrane segments spans residues 50–70 (MHAEMVLILIATLVVAQLLLV), 79–96 (SYNMVTLFQMWIVPVYFT), 99–119 (LHWWRFLGIWIVFSIITAYIT), 148–168 (ATGIVGYIAVMFTLFGLNLLF), and 173–193 (EDAMDFGISLLFYGLYYGVLG). Residues 226–276 (CAVCGQQIFVDVNEEGIIENTYRLSCNHVFHEFCIRGWCIVGKKQTCPYCK) form an RING-type; atypical zinc finger.

The protein belongs to the RNF121 family.

The protein localises to the endoplasmic reticulum membrane. The enzyme catalyses S-ubiquitinyl-[E2 ubiquitin-conjugating enzyme]-L-cysteine + [acceptor protein]-L-lysine = [E2 ubiquitin-conjugating enzyme]-L-cysteine + N(6)-ubiquitinyl-[acceptor protein]-L-lysine.. It participates in protein modification; protein ubiquitination. In terms of biological role, E3 ubiquitin ligase which accepts ubiquitin and transfers it to substrates thereby promoting their degradation by the endoplasmic reticulum-associated degradation (ERAD) pathway which is a pathway involved in ubiquitin-dependent degradation of misfolded endoplasmic reticulum proteins. May regulate the unfolded protein response to reduce endoplasmic reticulum stress. The protein is E3 ubiquitin ligase Rnf121 (rnf121) of Xenopus laevis (African clawed frog).